The primary structure comprises 914 residues: Beta-mannosidase A (914 aa).

A signal peptide spans 1-20; it reads MRFTATAAALVASSIPATLG. N-linked (GlcNAc...) asparagine glycosylation is found at Asn39, Asn79, Asn230, Asn265, Asn299, Asn309, and Asn330. The Proton donor role is filled by Glu462. 8 N-linked (GlcNAc...) asparagine glycosylation sites follow: Asn591, Asn614, Asn641, Asn721, Asn744, Asn773, Asn784, and Asn909.

This sequence belongs to the glycosyl hydrolase 2 family. Beta-mannosidase A subfamily. In terms of assembly, homodimer.

It is found in the secreted. It catalyses the reaction Hydrolysis of terminal, non-reducing beta-D-mannose residues in beta-D-mannosides.. It functions in the pathway glycan metabolism; N-glycan degradation. Exoglycosidase that cleaves the single beta-linked mannose residue from the non-reducing end of beta-mannosidic oligosaccharides of various complexity and length. Involved in the degradation of polymeric mannan and galactomannan. This is Beta-mannosidase A (mndA) from Aspergillus flavus (strain ATCC 200026 / FGSC A1120 / IAM 13836 / NRRL 3357 / JCM 12722 / SRRC 167).